Here is a 43-residue protein sequence, read N- to C-terminus: Neurotrophic factor BDNF (43 aa).

This sequence belongs to the NGF-beta family.

The protein resides in the secreted. Functionally, promotes the survival of neuronal populations that are all located either in the central nervous system or directly connected to it. The polypeptide is Neurotrophic factor BDNF (bdnf) (Raja clavata (Thornback ray)).